We begin with the raw amino-acid sequence, 217 residues long: Cytidylate kinase (217 aa).

9-17 (GPAASGKSS) is an ATP binding site.

It belongs to the cytidylate kinase family. Type 1 subfamily.

The protein resides in the cytoplasm. It catalyses the reaction CMP + ATP = CDP + ADP. The catalysed reaction is dCMP + ATP = dCDP + ADP. This is Cytidylate kinase from Bdellovibrio bacteriovorus (strain ATCC 15356 / DSM 50701 / NCIMB 9529 / HD100).